The primary structure comprises 274 residues: 4-hydroxy-3-methylbut-2-enyl diphosphate reductase (274 aa).

A [4Fe-4S] cluster-binding site is contributed by Cys-12. (2E)-4-hydroxy-3-methylbut-2-enyl diphosphate contacts are provided by His-36 and His-70. Residues His-36 and His-70 each coordinate dimethylallyl diphosphate. 2 residues coordinate isopentenyl diphosphate: His-36 and His-70. Cys-92 serves as a coordination point for [4Fe-4S] cluster. Residue His-120 participates in (2E)-4-hydroxy-3-methylbut-2-enyl diphosphate binding. His-120 contacts dimethylallyl diphosphate. Residue His-120 participates in isopentenyl diphosphate binding. Glu-122 functions as the Proton donor in the catalytic mechanism. Thr-158 is a (2E)-4-hydroxy-3-methylbut-2-enyl diphosphate binding site. Cys-186 contributes to the [4Fe-4S] cluster binding site. Ser-214, Ser-215, Asn-216, and Ser-258 together coordinate (2E)-4-hydroxy-3-methylbut-2-enyl diphosphate. Dimethylallyl diphosphate is bound by residues Ser-214, Ser-215, Asn-216, and Ser-258. The isopentenyl diphosphate site is built by Ser-214, Ser-215, Asn-216, and Ser-258.

Belongs to the IspH family. The cofactor is [4Fe-4S] cluster.

The enzyme catalyses isopentenyl diphosphate + 2 oxidized [2Fe-2S]-[ferredoxin] + H2O = (2E)-4-hydroxy-3-methylbut-2-enyl diphosphate + 2 reduced [2Fe-2S]-[ferredoxin] + 2 H(+). It catalyses the reaction dimethylallyl diphosphate + 2 oxidized [2Fe-2S]-[ferredoxin] + H2O = (2E)-4-hydroxy-3-methylbut-2-enyl diphosphate + 2 reduced [2Fe-2S]-[ferredoxin] + 2 H(+). The protein operates within isoprenoid biosynthesis; dimethylallyl diphosphate biosynthesis; dimethylallyl diphosphate from (2E)-4-hydroxy-3-methylbutenyl diphosphate: step 1/1. It functions in the pathway isoprenoid biosynthesis; isopentenyl diphosphate biosynthesis via DXP pathway; isopentenyl diphosphate from 1-deoxy-D-xylulose 5-phosphate: step 6/6. Its function is as follows. Catalyzes the conversion of 1-hydroxy-2-methyl-2-(E)-butenyl 4-diphosphate (HMBPP) into a mixture of isopentenyl diphosphate (IPP) and dimethylallyl diphosphate (DMAPP). Acts in the terminal step of the DOXP/MEP pathway for isoprenoid precursor biosynthesis. This is 4-hydroxy-3-methylbut-2-enyl diphosphate reductase from Helicobacter pylori (strain P12).